Consider the following 1046-residue polypeptide: MSKLPLGKRLKIRSMVHMAAEPIPNFWPMRTFIHHNPLHGLEHLPFEQAVRQGEKLFHARGFLPREDYQRYHKEGRVDQNSIKRDIADFISKQETLNGLDLASLLSDLMCSVKNKVTRTRALADHDDVFQALHGKQLENAEALDLKALTQRLCAQFAPERPLYEAIDLLFGTQMGTTLDELVIKSCLDFFDEGQSTIQMPGRHQGLFAAWTALAKRNLRLFLRGMHIKQILDQDDTPEGIIAYILDELGIEEAHWDGLITRELTRLHGWAGFIRWRSSSKHYYWAEQYPGDLIDFLAIRLVLGLALIREHSRQKRTPMTVKVLQEYIEGHTAECYLRQAYYGGCILPAFAHDVDDALSHKKPQRINNILPGYLRQQRQFEATRQADALRDLASKAGQTDALMALNAPQIKQLMTLIEAFENEEGMIWLRAMESVYRREIINQIQLYAPHKKEKRPFAQALFCIDVRSEPIRRNLETVGEYQTYGIAGFFGVPVSYIGLGKGSEVNLCPVVITPKNLVLEVPVGATSIETDFYSSADHVLHEMKSSILSPYFTVEAAGLLFGFDMIGKTIAPRRYTQIRNHIEPKAQATRLLVDKLTREQADSIVRSLQRAMIVRAIHQEFGIEREAVTDAMIRELREAAMDNYHEQTEFARRFALSPTAETQFIAGLKKDYKINRSFVSMQMERLARIGFSLDEQVFYVDKALTSIGLTENFSRFVLLAGHGSTSDNNPYESALDCGACGGSHGLVSARVLAHMANKPEVRRRLAKQGIQIPEDTWFVSVMHNTTTDQLSLQDLDLLPNSHLVYLERLRNGLRAATRLSAAERLPALLDHPSPNIDTLSAQKQIERNASDWTQVRPEWGLARNASVVAGGRHLTEGANLSGRTFLQSYDYRLDPKGRHLENILSNPLIIGQWINLEHYFSAVDNEHFGSGSKAYHNVVGRFGVVTGNLSDLRTGLPAQSVLKDGRPYHEPIRLLAIIEAPAAFTLEVAGRLPKVMSLITNGWITVVVVDPETGDRLFYDRGEWYNLNNDPQYTPSVKPLLEEELSA.

The Zn(2+) site is built by C462, D464, H721, and C736.

The protein belongs to the inorganic carbon transporter (TC 9.A.2) DabA family. As to quaternary structure, forms a complex with DabB1. It depends on Zn(2+) as a cofactor.

The protein resides in the cell inner membrane. Part of an energy-coupled inorganic carbon pump. The protein is Probable inorganic carbon transporter subunit DabA1 of Halothiobacillus neapolitanus (strain ATCC 23641 / c2) (Thiobacillus neapolitanus).